The chain runs to 350 residues: Guanine nucleotide-binding protein G(t) subunit alpha-1 (350 aa).

A disordered region spans residues Met-1–Glu-21. Gly-2 carries the N-myristoyl glycine lipid modification. The span at Ala-7 to Glu-21 shows a compositional bias: basic and acidic residues. One can recognise a G-alpha domain in the interval Arg-28 to Phe-350. The tract at residues Lys-31 to Thr-44 is G1 motif. Gly-36 to Ser-43 serves as a coordination point for GTP. Residue Ser-43 participates in Mg(2+) binding. A Phosphotyrosine modification is found at Tyr-142. Residues Asp-146, Leu-171 to Thr-177, Gly-199, Asn-265 to Asp-268, and Ala-322 each bind GTP. Residues Asp-169–Thr-177 form a G2 motif region. Thr-177 provides a ligand contact to Mg(2+). The tract at residues Phe-192–Arg-201 is G3 motif. The interval Val-261–Asp-268 is G4 motif. Residues Thr-320–Thr-325 are G5 motif. The tract at residues Ile-340–Phe-350 is interaction with RHO.

This sequence belongs to the G-alpha family. G(i/o/t/z) subfamily. As to quaternary structure, heterotrimeric G proteins are composed of 3 subunits alpha, beta and gamma. The alpha chain contains the guanine nucleotide binding site. Interacts with RHO. Interacts with RGS9 and PDE6G. Interacts (when myristoylated) with UNC119; interaction is required for localization in sensory neurons. In terms of tissue distribution, in the retina, expressed in the rod photoreceptors.

Its subcellular location is the cell projection. The protein resides in the cilium. It localises to the photoreceptor outer segment. The protein localises to the membrane. It is found in the photoreceptor inner segment. Functionally, functions as a signal transducer for the rod photoreceptor RHO. Required for normal RHO-mediated light perception by the retina. Guanine nucleotide-binding proteins (G proteins) function as transducers downstream of G protein-coupled receptors (GPCRs), such as the photoreceptor RHO. The alpha chain contains the guanine nucleotide binding site and alternates between an active, GTP-bound state and an inactive, GDP-bound state. Activated RHO promotes GDP release and GTP binding. Signaling is mediated via downstream effector proteins, such as cGMP-phosphodiesterase. The polypeptide is Guanine nucleotide-binding protein G(t) subunit alpha-1 (Gnat1) (Mus musculus (Mouse)).